The following is a 264-amino-acid chain: tRNA pseudouridine synthase A (264 aa).

Aspartate 51 acts as the Nucleophile in catalysis. Tyrosine 109 is a binding site for substrate.

This sequence belongs to the tRNA pseudouridine synthase TruA family. Homodimer.

The enzyme catalyses uridine(38/39/40) in tRNA = pseudouridine(38/39/40) in tRNA. Formation of pseudouridine at positions 38, 39 and 40 in the anticodon stem and loop of transfer RNAs. This Pseudoalteromonas translucida (strain TAC 125) protein is tRNA pseudouridine synthase A.